We begin with the raw amino-acid sequence, 444 residues long: Cobyrinate a,c-diamide synthase (444 aa).

Positions 250–438 (IIAIAQDRAF…PHIHFFGSYK (189 aa)) constitute a GATase cobBQ-type domain. The active-site Nucleophile is Cys-332.

The protein belongs to the CobB/CbiA family. Mg(2+) is required as a cofactor.

It carries out the reaction cob(II)yrinate + 2 L-glutamine + 2 ATP + 2 H2O = cob(II)yrinate a,c diamide + 2 L-glutamate + 2 ADP + 2 phosphate + 2 H(+). Its pathway is cofactor biosynthesis; adenosylcobalamin biosynthesis; cob(II)yrinate a,c-diamide from sirohydrochlorin (anaerobic route): step 10/10. Its function is as follows. Catalyzes the ATP-dependent amidation of the two carboxylate groups at positions a and c of cobyrinate, using either L-glutamine or ammonia as the nitrogen source. The sequence is that of Cobyrinate a,c-diamide synthase from Fusobacterium nucleatum subsp. nucleatum (strain ATCC 25586 / DSM 15643 / BCRC 10681 / CIP 101130 / JCM 8532 / KCTC 2640 / LMG 13131 / VPI 4355).